Consider the following 40-residue polypeptide: Conotoxin Bt14.16 (40 aa).

Positions 1 to 18 are excised as a propeptide; it reads SDGRDAAVIYTESDVIAR. 2 disulfides stabilise this stretch: Cys-21–Cys-36 and Cys-24–Cys-29.

Belongs to the conotoxin A superfamily. As to expression, expressed by the venom duct.

It is found in the secreted. In terms of biological role, probable neurotoxin with unknown target. Possibly targets ion channels. The chain is Conotoxin Bt14.16 from Conus betulinus (Beech cone).